The following is a 283-amino-acid chain: Heavy metal-associated isoprenylated plant protein 3 (283 aa).

Positions 1–22 (MGEKKNEGDNKKKGGDNKKKNE) are enriched in basic and acidic residues. The segment at 1–26 (MGEKKNEGDNKKKGGDNKKKNETPSI) is disordered. 2 consecutive HMA domains span residues 25–88 (SITV…KKKV) and 132–195 (VTTA…KRAV). Positions 36 and 39 each coordinate Zn(2+). Basic and acidic residues predominate over residues 82-129 (EKTKKKVDLVSPQPKKEKEKENKNKNDEDKKKSEEKKKPDNNDKKPKE). Residues 82–131 (EKTKKKVDLVSPQPKKEKEKENKNKNDEDKKKSEEKKKPDNNDKKPKETP) form a disordered region. Zn(2+) contacts are provided by cysteine 143 and cysteine 146. Basic and acidic residues predominate over residues 198 to 230 (VPPKKEKDKENGNENGEKKKGGGGDGGGKEKTG). The tract at residues 198-238 (VPPKKEKDKENGNENGEKKKGGGGDGGGKEKTGNKGGGEGV) is disordered. Cysteine 280 carries the cysteine methyl ester modification. Cysteine 280 is lipidated: S-farnesyl cysteine. Positions 281 to 283 (VVM) are cleaved as a propeptide — removed in mature form.

The protein belongs to the HIPP family.

It localises to the nucleus. It is found in the nucleolus. The protein localises to the cytoplasm. In terms of biological role, heavy-metal-binding protein. Binds high amounts of zinc. May act as an upstream regulator of the salicylate-dependent pathogen response. Involved in abiotic stress responses, and seed and flower development. In Arabidopsis thaliana (Mouse-ear cress), this protein is Heavy metal-associated isoprenylated plant protein 3.